We begin with the raw amino-acid sequence, 234 residues long: MSTSWPPRTVIRKASGLRTLELTLDRVGLGPVAGVDEAGRGACAGPLVIAACVLGSNQRKSLAALNDSKKLTEKMRETLFPLICRYAEAYHVVSVPADEVDRIGVHVANIEGMRRAVAGLGVKPGYVLTDGFRVPGLPVPSLPVIGGDASAACIAAASVLAKVSRDRVMVNMDSDHPGYGFAVHKGYSTAVHTEALRRLGPSAQHRQSFVNVRNAAMGSSLMRPLAPRESDTGG.

The RNase H type-2 domain maps to glycine 30–leucine 221. Aspartate 36, glutamate 37, and aspartate 130 together coordinate a divalent metal cation.

Belongs to the RNase HII family. The cofactor is Mn(2+). It depends on Mg(2+) as a cofactor.

It localises to the cytoplasm. It catalyses the reaction Endonucleolytic cleavage to 5'-phosphomonoester.. Its function is as follows. Endonuclease that specifically degrades the RNA of RNA-DNA hybrids. The sequence is that of Ribonuclease HII from Mycobacteroides abscessus (strain ATCC 19977 / DSM 44196 / CCUG 20993 / CIP 104536 / JCM 13569 / NCTC 13031 / TMC 1543 / L948) (Mycobacterium abscessus).